The sequence spans 826 residues: Ubiquitin carboxyl-terminal hydrolase 16 (826 aa).

The interval Met1–Met23 is disordered. The UBP-type zinc-finger motif lies at Pro22–Ala141. Zn(2+)-binding residues include Cys24, His26, Cys48, Cys51, Cys73, Cys76, Cys81, His89, His93, His102, Cys115, and Cys118. A Glycyl lysine isopeptide (Lys-Gly) (interchain with G-Cter in SUMO2) cross-link involves residue Lys139. A disordered region spans residues Thr145–Ile184. Residues Pro148–Ala180 are compositionally biased toward basic and acidic residues. Phosphoserine is present on Ser188. Positions Lys195–Ile825 constitute a USP domain. The active-site Nucleophile is Cys204. The segment covering Gln392 to Met407 has biased composition (basic and acidic residues). 2 disordered regions span residues Gln392–Gln456 and Ala526–Pro553. A compositionally biased stretch (acidic residues) spans Glu408–Asp419. Position 414 is a phosphoserine (Ser414). Residues His436–Gln456 are compositionally biased toward basic residues. The segment covering Ala526 to Val537 has biased composition (basic and acidic residues). Positions Ser539–Ser551 are enriched in polar residues. The active-site Proton acceptor is His760.

Belongs to the peptidase C19 family. USP16 subfamily. In terms of assembly, homotetramer. Associates with late pre-40S ribosomes. Interacts with CEP78; promoting deubiquitination of tektins. Phosphorylated at the onset of mitosis and dephosphorylated during the metaphase/anaphase transition. Phosphorylation by AURKB enhances the deubiquitinase activity.

The protein localises to the nucleus. It catalyses the reaction Thiol-dependent hydrolysis of ester, thioester, amide, peptide and isopeptide bonds formed by the C-terminal Gly of ubiquitin (a 76-residue protein attached to proteins as an intracellular targeting signal).. Specifically deubiquitinates 'Lys-120' of histone H2A (H2AK119Ub), a specific tag for epigenetic transcriptional repression, thereby acting as a coactivator. Deubiquitination of histone H2A is a prerequisite for subsequent phosphorylation at 'Ser-11' of histone H3 (H3S10ph), and is required for chromosome segregation when cells enter into mitosis. In resting B- and T-lymphocytes, phosphorylation by AURKB leads to enhance its activity, thereby maintaining transcription in resting lymphocytes. Regulates Hox gene expression via histone H2A deubiquitination. Prefers nucleosomal substrates. Does not deubiquitinate histone H2B. Also deubiquitinates non-histone proteins, such as ribosomal protein RPS27A: deubiquitination of monoubiquitinated RPS27A promotes maturation of the 40S ribosomal subunit. Also mediates deubiquitination of tektin proteins (TEKT1, TEKT2, TEK3, TEKT4 and TEKT5), promoting their stability. The polypeptide is Ubiquitin carboxyl-terminal hydrolase 16 (Usp16) (Rattus norvegicus (Rat)).